A 410-amino-acid polypeptide reads, in one-letter code: Dual-specificity RNA methyltransferase RlmN (410 aa).

Residues 7-26 are disordered; the sequence is VSSENLDGQQQSSSTPASPA. Low complexity predominate over residues 15–26; that stretch reads QQQSSSTPASPA. Catalysis depends on glutamate 120, which acts as the Proton acceptor. The 244-residue stretch at 130–373 folds into the Radical SAM core domain; that stretch reads TGSRKTLCIS…CTIRQTRGDD (244 aa). A disulfide bond links cysteine 137 and cysteine 378. Cysteine 144, cysteine 148, and cysteine 151 together coordinate [4Fe-4S] cluster. Residues 200–201, serine 232, 254–256, and asparagine 335 contribute to the S-adenosyl-L-methionine site; these read GE and SLH. Cysteine 378 serves as the catalytic S-methylcysteine intermediate.

It belongs to the radical SAM superfamily. RlmN family. It depends on [4Fe-4S] cluster as a cofactor.

The protein localises to the cytoplasm. The catalysed reaction is adenosine(2503) in 23S rRNA + 2 reduced [2Fe-2S]-[ferredoxin] + 2 S-adenosyl-L-methionine = 2-methyladenosine(2503) in 23S rRNA + 5'-deoxyadenosine + L-methionine + 2 oxidized [2Fe-2S]-[ferredoxin] + S-adenosyl-L-homocysteine. It catalyses the reaction adenosine(37) in tRNA + 2 reduced [2Fe-2S]-[ferredoxin] + 2 S-adenosyl-L-methionine = 2-methyladenosine(37) in tRNA + 5'-deoxyadenosine + L-methionine + 2 oxidized [2Fe-2S]-[ferredoxin] + S-adenosyl-L-homocysteine. In terms of biological role, specifically methylates position 2 of adenine 2503 in 23S rRNA and position 2 of adenine 37 in tRNAs. m2A2503 modification seems to play a crucial role in the proofreading step occurring at the peptidyl transferase center and thus would serve to optimize ribosomal fidelity. This Acinetobacter baumannii (strain AB307-0294) protein is Dual-specificity RNA methyltransferase RlmN.